A 292-amino-acid chain; its full sequence is Elongation factor Ts (292 aa).

An involved in Mg(2+) ion dislocation from EF-Tu region spans residues 80 to 83; the sequence is TDFV.

Belongs to the EF-Ts family.

It is found in the cytoplasm. In terms of biological role, associates with the EF-Tu.GDP complex and induces the exchange of GDP to GTP. It remains bound to the aminoacyl-tRNA.EF-Tu.GTP complex up to the GTP hydrolysis stage on the ribosome. This is Elongation factor Ts from Limosilactobacillus fermentum (strain NBRC 3956 / LMG 18251) (Lactobacillus fermentum).